Here is a 259-residue protein sequence, read N- to C-terminus: UDP-2,3-diacylglucosamine hydrolase (259 aa).

Residues Asp8, His10, Asp41, Asn79, and His114 each coordinate Mn(2+). Substrate is bound at residue 79–80; it reads NR. Substrate-binding residues include Asp122, Ser160, Asn164, Lys167, and His195. Mn(2+) is bound by residues His195 and His197.

It belongs to the LpxH family. The cofactor is Mn(2+).

Its subcellular location is the cell inner membrane. The catalysed reaction is UDP-2-N,3-O-bis[(3R)-3-hydroxytetradecanoyl]-alpha-D-glucosamine + H2O = 2-N,3-O-bis[(3R)-3-hydroxytetradecanoyl]-alpha-D-glucosaminyl 1-phosphate + UMP + 2 H(+). It participates in glycolipid biosynthesis; lipid IV(A) biosynthesis; lipid IV(A) from (3R)-3-hydroxytetradecanoyl-[acyl-carrier-protein] and UDP-N-acetyl-alpha-D-glucosamine: step 4/6. In terms of biological role, hydrolyzes the pyrophosphate bond of UDP-2,3-diacylglucosamine to yield 2,3-diacylglucosamine 1-phosphate (lipid X) and UMP by catalyzing the attack of water at the alpha-P atom. Involved in the biosynthesis of lipid A, a phosphorylated glycolipid that anchors the lipopolysaccharide to the outer membrane of the cell. The protein is UDP-2,3-diacylglucosamine hydrolase of Edwardsiella ictaluri (strain 93-146).